The following is a 210-amino-acid chain: Cilia- and flagella-associated protein 418 (210 aa).

Positions 1-77 (MAKDLDELLD…LINEIFEEPN (77 aa)) are required for interaction with FAM161A. Residues 24-59 (LDLGERPKGGSGGGGTHSGDRNGAQEKDTLRSTETF) are disordered. The span at 41-59 (SGDRNGAQEKDTLRSTETF) shows a compositional bias: basic and acidic residues.

In terms of assembly, interacts (via N-terminus) with FAM161A (via central region); the interaction is direct.

It is found in the cytoplasm. It localises to the photoreceptor inner segment. Functionally, may be involved in photoreceptor outer segment disk morphogenesis. The chain is Cilia- and flagella-associated protein 418 from Rattus norvegicus (Rat).